The primary structure comprises 253 residues: MQSITIRNTVIGEGLPKIIVPLMAAGEKELLEEIEAVNRLRPDIIEWRADVYEHVDSLDAVKDMLEMLRKAAGATPLLFTFRTHKEGGNKVIDDRFYIELLKTAIETKHIDLADVELFTGEAEVKLIVKTAEDNGVYVVMSNHDFHQTPKKEEIISRLRNMQAYGAHIPKIAVMPQSTEDVFVLLDATHTMKTQYADRPIITMSMAGTGLISRLAGEVFGSACTFGAGKEASAPGQIPVEELRSVLSILNKHM.

3-dehydroquinate-binding positions include 46 to 48 (EWR) and Arg-82. Catalysis depends on His-143, which acts as the Proton donor/acceptor. Residue Lys-170 is the Schiff-base intermediate with substrate of the active site. Residues Arg-213, Ser-232, and Gln-236 each contribute to the 3-dehydroquinate site.

The protein belongs to the type-I 3-dehydroquinase family. In terms of assembly, homodimer.

It catalyses the reaction 3-dehydroquinate = 3-dehydroshikimate + H2O. It participates in metabolic intermediate biosynthesis; chorismate biosynthesis; chorismate from D-erythrose 4-phosphate and phosphoenolpyruvate: step 3/7. Involved in the third step of the chorismate pathway, which leads to the biosynthesis of aromatic amino acids. Catalyzes the cis-dehydration of 3-dehydroquinate (DHQ) and introduces the first double bond of the aromatic ring to yield 3-dehydroshikimate. This chain is 3-dehydroquinate dehydratase, found in Bacillus velezensis (strain DSM 23117 / BGSC 10A6 / LMG 26770 / FZB42) (Bacillus amyloliquefaciens subsp. plantarum).